The chain runs to 252 residues: Imidazole glycerol phosphate synthase subunit HisF (252 aa).

Residues D11 and D130 contribute to the active site.

Belongs to the HisA/HisF family. In terms of assembly, heterodimer of HisH and HisF.

It localises to the cytoplasm. The enzyme catalyses 5-[(5-phospho-1-deoxy-D-ribulos-1-ylimino)methylamino]-1-(5-phospho-beta-D-ribosyl)imidazole-4-carboxamide + L-glutamine = D-erythro-1-(imidazol-4-yl)glycerol 3-phosphate + 5-amino-1-(5-phospho-beta-D-ribosyl)imidazole-4-carboxamide + L-glutamate + H(+). It participates in amino-acid biosynthesis; L-histidine biosynthesis; L-histidine from 5-phospho-alpha-D-ribose 1-diphosphate: step 5/9. In terms of biological role, IGPS catalyzes the conversion of PRFAR and glutamine to IGP, AICAR and glutamate. The HisF subunit catalyzes the cyclization activity that produces IGP and AICAR from PRFAR using the ammonia provided by the HisH subunit. The sequence is that of Imidazole glycerol phosphate synthase subunit HisF from Dictyoglomus turgidum (strain DSM 6724 / Z-1310).